A 190-amino-acid chain; its full sequence is Putative manganese efflux pump MntP (190 aa).

5 helical membrane passes run 37-57 (LILAGIFGVFQALMPVIGWGI), 64-84 (LSFIRAIDHWVAFLLLAGVGA), 111-131 (LILGLATSIDALAVGMGMAFV), 135-155 (IITLALAMGLTTFVLSLVGAW), and 164-184 (FGGWATVIGGLVLIGLGGNIL).

This sequence belongs to the MntP (TC 9.B.29) family.

The protein localises to the cell membrane. Its function is as follows. Probably functions as a manganese efflux pump. The protein is Putative manganese efflux pump MntP of Corynebacterium efficiens (strain DSM 44549 / YS-314 / AJ 12310 / JCM 11189 / NBRC 100395).